A 601-amino-acid chain; its full sequence is Glutathione-regulated potassium-efflux system protein KefB (601 aa).

13 helical membrane-spanning segments follow: residues 4–24 (ADLLTAGVLFLFAAVAAVPLA), 29–49 (IGAVLGYLLAGIAIGPWGLGF), 55–75 (EILHFSELGVVFLMFIIGLEL), 87–107 (IFGVGAAQVLLSAAVLAGLLM), 111–131 (FLWQAAVVGGIGLAMSSTAMA), 152–172 (VLLFQDLAVIPALALVPLLAG), 177–197 (HFDWFKVAMKVLAFAVMLIGG), 207–227 (FIAASGVREVFTAATLLLVLS), 230–250 (LFMDALGLSMALGTFIAGVLL), 262–282 (AIDPFKGLLLGLFFISVGMSL), 284–304 (LGVLYTHLLWVAASVVILVVI), 324–344 (MQFASVLSQGGEFAFVLFSTA), and 356–376 (ALLLVTVTLSMMTTPLLMKGI). One can recognise an RCK N-terminal domain in the interval 400 to 519 (KPQVIVVGFG…AGVTQFSRET (120 aa)).

The protein belongs to the monovalent cation:proton antiporter 2 (CPA2) transporter (TC 2.A.37) family. KefB subfamily. In terms of assembly, interacts with the regulatory subunit KefG.

The protein localises to the cell inner membrane. Pore-forming subunit of a potassium efflux system that confers protection against electrophiles. Catalyzes K(+)/H(+) antiport. This is Glutathione-regulated potassium-efflux system protein KefB from Salmonella paratyphi A (strain ATCC 9150 / SARB42).